A 193-amino-acid chain; its full sequence is Major intrinsically disordered NOTCH2-binding receptor 1-like homolog (193 aa).

The residue at position 82 (S82) is a Phosphoserine. N-linked (GlcNAc...) asparagine glycosylation is present at N128. Residues 172-192 (GLILLLVASILVTIVTLSTIF) form a helical membrane-spanning segment.

The protein belongs to the MINAR family. Interacts with NOTCH2. As to expression, widely expressed in the cortex and Purkinje cells of cerebellum. Expressed in the inner ear, mainly in the hair cells, spiral ganglia, the spiral limbus, and the stria vascularis.

Its subcellular location is the lysosome membrane. The protein localises to the endoplasmic reticulum membrane. Binds cholesterol and may regulate the distribution and homeostasis of cholesterol in hair cells. May play a role in angiogenesis. The polypeptide is Major intrinsically disordered NOTCH2-binding receptor 1-like homolog (Mus musculus (Mouse)).